We begin with the raw amino-acid sequence, 510 residues long: Cytochrome P450 monooxygenase btcC (510 aa).

Residues 1-21 (MSFPGVIFVVSFFPLLMGIAV) traverse the membrane as a helical segment. Heme is bound at residue Cys-446.

Belongs to the cytochrome P450 family. The cofactor is heme.

Its subcellular location is the membrane. It functions in the pathway secondary metabolite biosynthesis; terpenoid biosynthesis. Its function is as follows. Cytochrome P450 monooxygenase; part of the gene cluster that mediates the biosynthesis of betaestacins. The bifunctional terpene synthase btcA converts isopentenyl diphosphate (IPP) and dimethylallyl diphosphate (DMAPP) into the sesterterpene betaestacin I. The C-terminal prenyltransferase (PT) domain of btcA catalyzes formation of GFPP, whereas the N-terminal terpene cyclase (TC) domain catalyzes the cyclization of GFPP into betaestacin I. The cytochrome P450 monooxygenase btcB is then responsible for the six-step oxidation of betaestacin I to yield betaestacin II. The roles of the cytochrome P450 monooxygenase btcC and the alpha-ketoglutarate-dependent dioxygenase btcD have not been identified yet. The sequence is that of Cytochrome P450 monooxygenase btcC from Neocamarosporium betae (Beet black rot fungus).